A 201-amino-acid chain; its full sequence is MSQRSAGPELLRLIDLIAKLPGLGPRSARRVALHLLKRNDTLLKPLAEALAEAGAKIQKCATCGNFDTVQPCAVCQMPGRDDGIICVVEDVPDLWALERGGSFRGRYHVLGGALSAIDGIGPEDLGIASLVARVDAGGVREVILALNATVDGQTTAHYVADLLAGKGVDVTRLAHGVPVGGELDHLDDGTLAAALRSRRGV.

The C4-type zinc-finger motif lies at 60–75 (CATCGNFDTVQPCAVC). The Toprim domain maps to 83–178 (GIICVVEDVP…DVTRLAHGVP (96 aa)).

This sequence belongs to the RecR family.

In terms of biological role, may play a role in DNA repair. It seems to be involved in an RecBC-independent recombinational process of DNA repair. It may act with RecF and RecO. The chain is Recombination protein RecR from Hyphomonas neptunium (strain ATCC 15444).